The primary structure comprises 472 residues: ATP synthase subunit beta (472 aa).

Residue 157 to 164 participates in ATP binding; that stretch reads GGAGVGKT.

It belongs to the ATPase alpha/beta chains family. As to quaternary structure, F-type ATPases have 2 components, CF(1) - the catalytic core - and CF(0) - the membrane proton channel. CF(1) has five subunits: alpha(3), beta(3), gamma(1), delta(1), epsilon(1). CF(0) has three main subunits: a(1), b(2) and c(9-12). The alpha and beta chains form an alternating ring which encloses part of the gamma chain. CF(1) is attached to CF(0) by a central stalk formed by the gamma and epsilon chains, while a peripheral stalk is formed by the delta and b chains.

The protein localises to the cell membrane. It carries out the reaction ATP + H2O + 4 H(+)(in) = ADP + phosphate + 5 H(+)(out). Its function is as follows. Produces ATP from ADP in the presence of a proton gradient across the membrane. The catalytic sites are hosted primarily by the beta subunits. The polypeptide is ATP synthase subunit beta (Desulforamulus reducens (strain ATCC BAA-1160 / DSM 100696 / MI-1) (Desulfotomaculum reducens)).